Here is a 676-residue protein sequence, read N- to C-terminus: UvrABC system protein B (676 aa).

A Helicase ATP-binding domain is found at 26–414; the sequence is EGLENGLAHQ…SDGEIAEQVV (389 aa). 39–46 serves as a coordination point for ATP; sequence GVTGSGKT. The Beta-hairpin signature appears at 92-115; sequence YFDYYQPEAYVPTTDTFIEKDSSV. Positions 432-598 constitute a Helicase C-terminal domain; it reads QVDDLLSEIR…ALKKDVADIL (167 aa). Positions 636 to 671 constitute a UVR domain; that stretch reads EKAIQKLESKMYQHAKDLEFEQAAQVRDEIDNLRKQ.

It belongs to the UvrB family. As to quaternary structure, forms a heterotetramer with UvrA during the search for lesions. Interacts with UvrC in an incision complex.

It localises to the cytoplasm. The UvrABC repair system catalyzes the recognition and processing of DNA lesions. A damage recognition complex composed of 2 UvrA and 2 UvrB subunits scans DNA for abnormalities. Upon binding of the UvrA(2)B(2) complex to a putative damaged site, the DNA wraps around one UvrB monomer. DNA wrap is dependent on ATP binding by UvrB and probably causes local melting of the DNA helix, facilitating insertion of UvrB beta-hairpin between the DNA strands. Then UvrB probes one DNA strand for the presence of a lesion. If a lesion is found the UvrA subunits dissociate and the UvrB-DNA preincision complex is formed. This complex is subsequently bound by UvrC and the second UvrB is released. If no lesion is found, the DNA wraps around the other UvrB subunit that will check the other stand for damage. The sequence is that of UvrABC system protein B from Aliivibrio fischeri (strain ATCC 700601 / ES114) (Vibrio fischeri).